A 644-amino-acid polypeptide reads, in one-letter code: Chaperone protein DnaK (644 aa).

Thr200 carries the post-translational modification Phosphothreonine; by autocatalysis. Residues 603-644 (VMAAEQAKSGGAAPGAAPGGAQQAAPDADVVDADFKEVDDKK) form a disordered region. Low complexity predominate over residues 612 to 630 (GGAAPGAAPGGAQQAAPDA). Residues 635 to 644 (ADFKEVDDKK) are compositionally biased toward basic and acidic residues.

This sequence belongs to the heat shock protein 70 family.

Functionally, acts as a chaperone. The polypeptide is Chaperone protein DnaK (Polynucleobacter asymbioticus (strain DSM 18221 / CIP 109841 / QLW-P1DMWA-1) (Polynucleobacter necessarius subsp. asymbioticus)).